The following is a 181-amino-acid chain: ATP synthase subunit delta (181 aa).

Belongs to the ATPase delta chain family. F-type ATPases have 2 components, F(1) - the catalytic core - and F(0) - the membrane proton channel. F(1) has five subunits: alpha(3), beta(3), gamma(1), delta(1), epsilon(1). F(0) has three main subunits: a(1), b(2) and c(10-14). The alpha and beta chains form an alternating ring which encloses part of the gamma chain. F(1) is attached to F(0) by a central stalk formed by the gamma and epsilon chains, while a peripheral stalk is formed by the delta and b chains.

It localises to the cell membrane. F(1)F(0) ATP synthase produces ATP from ADP in the presence of a proton or sodium gradient. F-type ATPases consist of two structural domains, F(1) containing the extramembraneous catalytic core and F(0) containing the membrane proton channel, linked together by a central stalk and a peripheral stalk. During catalysis, ATP synthesis in the catalytic domain of F(1) is coupled via a rotary mechanism of the central stalk subunits to proton translocation. In terms of biological role, this protein is part of the stalk that links CF(0) to CF(1). It either transmits conformational changes from CF(0) to CF(1) or is implicated in proton conduction. The protein is ATP synthase subunit delta of Clostridioides difficile (strain 630) (Peptoclostridium difficile).